A 546-amino-acid chain; its full sequence is NAD(P)H-quinone oxidoreductase chain 4 (546 aa).

A run of 14 helical transmembrane segments spans residues Phe24 to Phe44, Phe56 to Phe76, Ile106 to Trp126, Pro132 to Val152, Leu156 to Trp176, Phe188 to Phe208, Ile232 to His252, Thr263 to Leu283, Phe297 to Phe317, Ile326 to Ser346, Ala352 to Ala372, Phe396 to Val416, Val437 to Met457, and Val484 to Val504.

The protein belongs to the complex I subunit 4 family.

It localises to the cellular thylakoid membrane. It catalyses the reaction a plastoquinone + NADH + (n+1) H(+)(in) = a plastoquinol + NAD(+) + n H(+)(out). The catalysed reaction is a plastoquinone + NADPH + (n+1) H(+)(in) = a plastoquinol + NADP(+) + n H(+)(out). NDH-1 shuttles electrons from NAD(P)H, via FMN and iron-sulfur (Fe-S) centers, to quinones in the respiratory chain. The immediate electron acceptor for the enzyme in this species is believed to be plastoquinone. Couples the redox reaction to proton translocation (for every two electrons transferred, four hydrogen ions are translocated across the cytoplasmic membrane), and thus conserves the redox energy in a proton gradient. The sequence is that of NAD(P)H-quinone oxidoreductase chain 4 from Prochlorococcus marinus (strain MIT 9515).